A 325-amino-acid chain; its full sequence is GMP reductase (325 aa).

The Thioimidate intermediate role is filled by Cys-174. 203 to 226 is an NADP(+) binding site; sequence LIADGGIRTHGDIAKSIRFGATMV.

This sequence belongs to the IMPDH/GMPR family. GuaC type 2 subfamily.

The catalysed reaction is IMP + NH4(+) + NADP(+) = GMP + NADPH + 2 H(+). Its function is as follows. Catalyzes the irreversible NADPH-dependent deamination of GMP to IMP. It functions in the conversion of nucleobase, nucleoside and nucleotide derivatives of G to A nucleotides, and in maintaining the intracellular balance of A and G nucleotides. The chain is GMP reductase from Pediococcus pentosaceus (strain ATCC 25745 / CCUG 21536 / LMG 10740 / 183-1w).